We begin with the raw amino-acid sequence, 159 residues long: RNA pyrophosphohydrolase (159 aa).

A Nudix hydrolase domain is found at glycine 6–lysine 149. Residues glycine 38–glycine 59 carry the Nudix box motif.

Belongs to the Nudix hydrolase family. RppH subfamily. A divalent metal cation is required as a cofactor.

Accelerates the degradation of transcripts by removing pyrophosphate from the 5'-end of triphosphorylated RNA, leading to a more labile monophosphorylated state that can stimulate subsequent ribonuclease cleavage. The protein is RNA pyrophosphohydrolase of Pseudomonas fluorescens (strain SBW25).